The sequence spans 87 residues: Small polypeptide ROTUNDIFOLIA LIKE 2 (87 aa).

A helical membrane pass occupies residues 19-35 (LIPHTSHYILQLVYLHL). Residues 56 to 87 (GQMGRLNRAFREKRARFYIFRRCVIMLLRWSD) form a required for DVL/RTFL small polypeptide activity region.

It belongs to the DVL/RTFL small polypeptides family.

Its subcellular location is the cell membrane. Its function is as follows. Small polypeptide acting as a regulatory molecule which coordinates cellular responses required for differentiation, growth and development, probably by restricting polar cell proliferation in lateral organs. In Oryza sativa subsp. japonica (Rice), this protein is Small polypeptide ROTUNDIFOLIA LIKE 2.